A 128-amino-acid polypeptide reads, in one-letter code: Large ribosomal subunit protein bL17 (128 aa).

The protein belongs to the bacterial ribosomal protein bL17 family. In terms of assembly, part of the 50S ribosomal subunit. Contacts protein L32.

This is Large ribosomal subunit protein bL17 from Pseudomonas fluorescens (strain Pf0-1).